The chain runs to 504 residues: Glutamate--tRNA ligase (504 aa).

Positions 12 to 22 (PSPTGALHIGG) match the 'HIGH' region motif. A 'KMSKS' region motif is present at residues 260-264 (KLSKR). Lys-263 lines the ATP pocket.

It belongs to the class-I aminoacyl-tRNA synthetase family. Glutamate--tRNA ligase type 1 subfamily. In terms of assembly, monomer.

Its subcellular location is the cytoplasm. It catalyses the reaction tRNA(Glu) + L-glutamate + ATP = L-glutamyl-tRNA(Glu) + AMP + diphosphate. In terms of biological role, catalyzes the attachment of glutamate to tRNA(Glu) in a two-step reaction: glutamate is first activated by ATP to form Glu-AMP and then transferred to the acceptor end of tRNA(Glu). The protein is Glutamate--tRNA ligase of Bacteroides thetaiotaomicron (strain ATCC 29148 / DSM 2079 / JCM 5827 / CCUG 10774 / NCTC 10582 / VPI-5482 / E50).